A 342-amino-acid chain; its full sequence is Large ribosomal subunit protein uL3 (342 aa).

It belongs to the universal ribosomal protein uL3 family. Part of the 50S ribosomal subunit. Forms a cluster with proteins L14 and L24e.

One of the primary rRNA binding proteins, it binds directly near the 3'-end of the 23S rRNA, where it nucleates assembly of the 50S subunit. In Pyrobaculum islandicum (strain DSM 4184 / JCM 9189 / GEO3), this protein is Large ribosomal subunit protein uL3.